The sequence spans 623 residues: DNA-directed RNA polymerase subunit beta' (623 aa).

The Zn(2+) site is built by Cys70, Cys72, Cys85, and Cys88. Mg(2+)-binding residues include Asp466, Asp468, and Asp470.

It belongs to the RNA polymerase beta' chain family. RpoC1 subfamily. As to quaternary structure, in plastids the minimal PEP RNA polymerase catalytic core is composed of four subunits: alpha, beta, beta', and beta''. When a (nuclear-encoded) sigma factor is associated with the core the holoenzyme is formed, which can initiate transcription. Mg(2+) is required as a cofactor. The cofactor is Zn(2+).

It localises to the plastid. The protein resides in the chloroplast. The catalysed reaction is RNA(n) + a ribonucleoside 5'-triphosphate = RNA(n+1) + diphosphate. Functionally, DNA-dependent RNA polymerase catalyzes the transcription of DNA into RNA using the four ribonucleoside triphosphates as substrates. This chain is DNA-directed RNA polymerase subunit beta', found in Rhodomonas salina (Cryptomonas salina).